The primary structure comprises 660 residues: Pro-secreted protein ORF2 (660 aa).

An N-terminal signal peptide occupies residues 1-23; the sequence is MRPRAVLLLLFVLLPMLPAPPAG. 2 disordered regions span residues 19 to 43 and 64 to 125; these read APPA…GFWG and ADVV…VPDV. Positions 28–33 match the Nuclear localization signal motif; that stretch reads RRRGRR. Low complexity predominate over residues 93-124; that stretch reads RPSAAPRRRSAPAGAAPLTAVSPAPDTAPVPD. N137 and N310 each carry an N-linked (GlcNAc...) asparagine; by host glycan. Positions 368–394 are particle formation; it reads IALTLFNLADTLLGGLPTELISSAGGQ. N562 carries an N-linked (GlcNAc...) asparagine; by host glycan. The oligomerization stretch occupies residues 585–610; sequence TTSLGAGPTSISAVGVLAPHSALAVL.

Belongs to the hepevirus capsid protein family. As to quaternary structure, homodimer. In terms of assembly, self-assembles to form the capsid. The capsid is dominated by dimers that define the 30 morphological units. Interacts with phosphorylated protein ORF3. Interacts with host TMEM134. Interacts with host ASGR1 and ASGR2; these interactions facilitate infection of host hepatocytes. In terms of processing, cleaved by host protease in the N-terminus. N-glycosylated. Post-translationally, not N-glycosylated. The C-terminus of the capsid protein ORF2 is truncated in non-enveloped virions shedded in feces, probably due to host proteases.

Its subcellular location is the secreted. The protein localises to the virion. The protein resides in the host cytoplasm. It localises to the host endoplasmic reticulum. It is found in the host Golgi apparatus. Its subcellular location is the host cell surface. The protein localises to the host nucleus. Plays a role in the inhibition of host antibody-mediated neutralization without blocking viral cell entry. Functionally, forms an icosahedral capsid with a T=1 symmetry and a 34 nm diameter. The capsid is composed of 60 copies linked to each other. Binds to the 5' end of the genomic RNA to mediate genome encapsidation. Binds to heparin surface proteoglycans (HSPGs) to mediate viral entry. Additionally, the interactions with host ASGR1 and ASGR2 facilitate viral infection of hepatocytes. Inhibits IFN production by blocking host TBK1-induced IRF3 phosphorylation. The nuclear form probably modulates host gene expression. This Hepatitis E virus genotype 3 (isolate Human/United States/US2) (HEV-3) protein is Pro-secreted protein ORF2.